The chain runs to 1011 residues: CRM-domain containing factor CFM2, chloroplastic (1011 aa).

Residues 1-45 constitute a chloroplast transit peptide; it reads MLLPLFHQQPLILAKTFPDRIFPPFLVPNTLVSRRNVSRANSGIF. Basic and acidic residues predominate over residues 77-90; that stretch reads HDSPTRRITGEESG. A disordered region spans residues 77 to 96; the sequence is HDSPTRRITGEESGKNSPGE. CRM domains follow at residues 164 to 260, 376 to 473, and 577 to 677; these read LTLP…YFVS, PKLT…AVSS, and EGIT…QCLR. 2 disordered regions span residues 721–810 and 841–872; these read DSAT…GNSL and LNANRKLPGSSTGSGSQISALRERKSENDGLV. Residues 722 to 736 show a composition bias toward polar residues; it reads SATNETWSDGESSNM. A compositionally biased stretch (basic and acidic residues) spans 743–757; that stretch reads ENQHTEPEKAREKIE. The span at 762 to 771 shows a compositional bias: polar residues; that stretch reads SDLSVPSSGE. Over residues 772 to 782 the composition is skewed to acidic residues; that stretch reads ENWEDDSEGEV. Residues 849 to 859 are compositionally biased toward polar residues; sequence GSSTGSGSQIS. Residues 873–972 form the CRM 4 domain; that stretch reads TDLSNRERLI…WGAEEEMKSF (100 aa).

As to quaternary structure, interacts with RNA. Part of large ribonucleo-protein particles that contain CAF1 and/or CAF2.

The protein resides in the plastid. Its subcellular location is the chloroplast stroma. Functionally, binds specific group II introns in chloroplasts and facilitates their splicing. Acts on both subgroup IIA and subgroup IIB introns. The substrates of the subgroup IIB also require the CRM domain proteins CAF1 or CAF2, with a simultaneous binding of CFM2 and CAF1 or CAF2. Can bind to and promote the splicing of the single group I intron in chloroplast tRNA transcript of trnL-UAA gene. In Arabidopsis thaliana (Mouse-ear cress), this protein is CRM-domain containing factor CFM2, chloroplastic.